The sequence spans 146 residues: Large ribosomal subunit protein uL15 (146 aa).

The disordered stretch occupies residues 1–54 (MTIKLHDLRPAPGSKTPRTRVGRGEGSKGKTAGRGTKGTKARKQVPTTFEGGQM).

It belongs to the universal ribosomal protein uL15 family. Part of the 50S ribosomal subunit.

Binds to the 23S rRNA. This Mycobacterium ulcerans (strain Agy99) protein is Large ribosomal subunit protein uL15.